The sequence spans 356 residues: UDP-3-O-acylglucosamine N-acyltransferase (356 aa).

Histidine 242 (proton acceptor) is an active-site residue.

It belongs to the transferase hexapeptide repeat family. LpxD subfamily. As to quaternary structure, homotrimer.

The catalysed reaction is a UDP-3-O-[(3R)-3-hydroxyacyl]-alpha-D-glucosamine + a (3R)-hydroxyacyl-[ACP] = a UDP-2-N,3-O-bis[(3R)-3-hydroxyacyl]-alpha-D-glucosamine + holo-[ACP] + H(+). It participates in bacterial outer membrane biogenesis; LPS lipid A biosynthesis. Functionally, catalyzes the N-acylation of UDP-3-O-acylglucosamine using 3-hydroxyacyl-ACP as the acyl donor. Is involved in the biosynthesis of lipid A, a phosphorylated glycolipid that anchors the lipopolysaccharide to the outer membrane of the cell. The sequence is that of UDP-3-O-acylglucosamine N-acyltransferase from Acinetobacter baumannii (strain AB307-0294).